Consider the following 281-residue polypeptide: ATP phosphoribosyltransferase (281 aa).

Belongs to the ATP phosphoribosyltransferase family. Long subfamily. In terms of assembly, equilibrium between an active dimeric form, an inactive hexameric form and higher aggregates. Interconversion between the various forms is largely reversible and is influenced by the natural substrates and inhibitors of the enzyme. The cofactor is Mg(2+).

The protein resides in the cytoplasm. It carries out the reaction 1-(5-phospho-beta-D-ribosyl)-ATP + diphosphate = 5-phospho-alpha-D-ribose 1-diphosphate + ATP. It functions in the pathway amino-acid biosynthesis; L-histidine biosynthesis; L-histidine from 5-phospho-alpha-D-ribose 1-diphosphate: step 1/9. Its activity is regulated as follows. Feedback inhibited by histidine. Catalyzes the condensation of ATP and 5-phosphoribose 1-diphosphate to form N'-(5'-phosphoribosyl)-ATP (PR-ATP). Has a crucial role in the pathway because the rate of histidine biosynthesis seems to be controlled primarily by regulation of HisG enzymatic activity. The protein is ATP phosphoribosyltransferase of Mycolicibacterium gilvum (strain PYR-GCK) (Mycobacterium gilvum (strain PYR-GCK)).